Consider the following 411-residue polypeptide: Histone-lysine N-methyltransferase SUV39H1-A (411 aa).

The Chromo domain occupies 43 to 101; that stretch reads YEVEYLCNYKKHKGREFFLVKWKGYEESENTWEPLKNLKCPILLHQFRKDMKAALLQAN. In terms of domain architecture, Pre-SET spans 178-239; sequence VGCECEDCVS…DCANRVVQRG (62 aa). C180, C182, C185, C193, C194, C221, C225, C227, and C231 together coordinate Zn(2+). One can recognise an SET domain in the interval 242 to 365; the sequence is YDLCIFKTDN…AGEELTFDYK (124 aa). S-adenosyl-L-methionine is bound by residues 253 to 255, Y296, and 322 to 323; these read RGW and NH. Zn(2+)-binding residues include C325, C399, C401, and C406. One can recognise a Post-SET domain in the interval 395–411; it reads VHMECKCGVRNCRKYLF.

This sequence belongs to the class V-like SAM-binding methyltransferase superfamily. Histone-lysine methyltransferase family. Suvar3-9 subfamily. Expressed ubuitiously.

The protein resides in the nucleus. It localises to the chromosome. The protein localises to the centromere. It carries out the reaction N(6)-methyl-L-lysyl(9)-[histone H3] + S-adenosyl-L-methionine = N(6),N(6)-dimethyl-L-lysyl(9)-[histone H3] + S-adenosyl-L-homocysteine + H(+). The enzyme catalyses N(6),N(6)-dimethyl-L-lysyl(9)-[histone H3] + S-adenosyl-L-methionine = N(6),N(6),N(6)-trimethyl-L-lysyl(9)-[histone H3] + S-adenosyl-L-homocysteine + H(+). Functionally, histone methyltransferase that specifically trimethylates 'Lys-9' of histone H3 using monomethylated H3 'Lys-9' as substrate. H3 'Lys-9' trimethylation represents a specific tag for epigenetic transcriptional repression by recruiting HP1 (CBX1, CBX3 and/or CBX5) proteins to methylated histones. Mainly functions in heterochromatin regions, thereby playing a central role in the establishment of constitutive heterochromatin at pericentric and telomere regions. H3 'Lys-9' trimethylation is also required to direct DNA methylation at pericentric repeats. SUV39H1 is targeted to histone H3 via its interaction with RB1 and is involved in many processes, such as regulation of organ-specific terminal differentiation during development. The protein is Histone-lysine N-methyltransferase SUV39H1-A (suv39h1a) of Danio rerio (Zebrafish).